We begin with the raw amino-acid sequence, 147 residues long: Small ribosomal subunit protein bS18 (147 aa).

It belongs to the bacterial ribosomal protein bS18 family. Part of the 30S ribosomal subunit. Forms a tight heterodimer with protein bS6.

Its function is as follows. Binds as a heterodimer with protein bS6 to the central domain of the 16S rRNA, where it helps stabilize the platform of the 30S subunit. The sequence is that of Small ribosomal subunit protein bS18 from Dehalococcoides mccartyi (strain ATCC BAA-2100 / JCM 16839 / KCTC 5957 / BAV1).